The sequence spans 643 residues: E3 ubiquitin-protein ligase AMFR (643 aa).

Transmembrane regions (helical) follow at residues 82–102 (LFVWVLVNTACCVLMLVAKLI), 122–142 (FWNFIFYKFIFIFGVLNVQTV), 186–206 (VLSLLIAMLLSCCGLAVVCCV), 215–235 (TLAFMAAESLLVTVRTAHVIL), 254–274 (GTYVYYTDFVMELALLSLDLM), and 276–296 (HIHMLLFGNIWLSMASLVIFM). The RING-type zinc finger occupies 341–379 (CAICWDSMQAARKLPCGHLFHNSCLRSWLEQDTSCPTCR). The chain crosses the membrane as a helical span at residues 429 to 449 (IASWLPSFSVEVMHTTNILGI). The CUE domain occupies 456–498 (QLNAMAHQIQEMFPQVPYHLVLQDLQMTRSVEITTDNILEGRI). Positions 504–535 (TQRSDSLRPALNSPVERPSPDLEEGEASVQTE) are disordered. Residues Ser-516 and Ser-542 each carry the phosphoserine modification. The interval 598–624 (LNKSSEDDGASERLLPSEGTSSDPVTL) is disordered. The VCP/p97-interacting motif (VIM) stretch occupies residues 622-640 (VTLRRRMLAAAAERRLQRQ).

In terms of assembly, interacts with RNF5. Also forms an ERAD complex containing VCP/p97, NGLY1; PSMC1; SAKS1 and RAD23B required for coupling retrotranslocation, ubiquitination and deglycosylation. Interacts with DERL1. Interacts (through a region distinct from the RING finger) with UBE2G2/UBC7. Component of the VCP/p97-AMFR/gp78 complex that enhances VCP/p97 binding to polyubiquitinated proteins for their degradation by the endoplasmic reticulum-associated degradation (ERAD) pathway. Interacts (via the VIM) with VCP/p97. Interacts (via its membrane domain) with INSIG1; the interaction initiates the sterol-mediated ubiquitination and degradation of HMGCR by the ERAD pathway. Interacts with AUP1, UBE2G2 and RNF139/TRC8; interaction with AUP1 facilitates interaction of AMFR with ubiquitin-conjugating enzyme UBE2G2 and ubiquitin ligase RNF139, leading to sterol-induced ubiquitination of HNGCR and its subsequent proteasomal degradation. Interacts with BAG6. Interacts with USP13 (via UBA 2 domain); the interaction is direct. Interacts with LMBR1L, UBAC2 and CTNNB1. Interacts with C18orf32. Palmitoylation of the RING-type zing finger by ZDHHC6 promotes localization to the peripheral endoplasmic reticulum. As to expression, expressed in heart, brain, liver, lung, skeletal muscle, kidney and testis. Not detected in spleen.

Its subcellular location is the endoplasmic reticulum membrane. The catalysed reaction is [E2 ubiquitin-conjugating enzyme]-S-ubiquitinyl-L-cysteine + [acceptor protein]-L-cysteine = [E2 ubiquitin-conjugating enzyme]-L-cysteine + [acceptor protein]-S-ubiquitinyl-L-cysteine.. Its pathway is protein modification; protein ubiquitination. Its function is as follows. E3 ubiquitin-protein ligase that mediates the polyubiquitination of lysine and cysteine residues on target proteins, such as CD3D, CYP3A4, CFTR, INSIG1, SOAT2/ACAT2 and APOB for proteasomal degradation. Component of a VCP/p97-AMFR/gp78 complex that participates in the final step of endoplasmic reticulum-associated degradation (ERAD). The VCP/p97-AMFR/gp78 complex is involved in the sterol-accelerated ERAD degradation of HMGCR through binding to the HMGCR-INSIG1 complex at the ER membrane. In addition, interaction of AMFR with AUP1 facilitates interaction of AMFR with ubiquitin-conjugating enzyme UBE2G2 and ubiquitin ligase RNF139, leading to sterol-induced HMGCR ubiquitination. The ubiquitinated HMGCR is then released from the ER by the complex into the cytosol for subsequent destruction. In addition to ubiquitination on lysine residues, catalyzes ubiquitination on cysteine residues: together with INSIG1, mediates polyubiquitination of SOAT2/ACAT2 at 'Cys-277', leading to its degradation when the lipid levels are low. Catalyzes ubiquitination and subsequent degradation of INSIG1 when cells are depleted of sterols. Mediates polyubiquitination of INSIG2 at 'Cys-215' in some tissues, leading to its degradation. Also regulates ERAD through the ubiquitination of UBL4A a component of the BAG6/BAT3 complex. Also acts as a scaffold protein to assemble a complex that couples ubiquitination, retranslocation and deglycosylation. Mediates tumor invasion and metastasis as a receptor for the GPI/autocrine motility factor. In association with LMBR1L and UBAC2, negatively regulates the canonical Wnt signaling pathway in the lymphocytes by promoting the ubiquitin-mediated degradation of CTNNB1 and Wnt receptors FZD6 and LRP6. Regulates NF-kappa-B and MAPK signaling pathways by mediating 'Lys-27'-linked polyubiquitination of TAB3 and promoting subsequent TAK1/MAP3K7 activation. The polypeptide is E3 ubiquitin-protein ligase AMFR (Amfr) (Mus musculus (Mouse)).